Reading from the N-terminus, the 172-residue chain is Transcriptional repressor NrdR (172 aa).

A zinc finger spans residues 3–34; it reads CPFCGAPDTRVIDSRLAGEGDQVRRRRECLSC. The region spanning 49 to 139 is the ATP-cone domain; sequence PRVVKRDGSR…VYLSFADVQA (91 aa).

Belongs to the NrdR family. Requires Zn(2+) as cofactor.

Negatively regulates transcription of bacterial ribonucleotide reductase nrd genes and operons by binding to NrdR-boxes. The polypeptide is Transcriptional repressor NrdR (Thioalkalivibrio sulfidiphilus (strain HL-EbGR7)).